The following is a 764-amino-acid chain: Reticulon-1 (764 aa).

Disordered regions lie at residues 1 to 37 (MAAN…GGAL), 115 to 147 (PDIK…SGIE), 247 to 400 (LYNS…SEIE), and 455 to 475 (ESCD…DSPM). The segment covering 261 to 282 (VTISFTGMETTLQTEYPENQQG) has biased composition (polar residues). Residues 328–337 (EEQRKYKISE) are compositionally biased toward basic and acidic residues. Residues 578-764 (AIELLYWRDI…AKIPGTKQKE (187 aa)) form the Reticulon domain. Helical transmembrane passes span 607-627 (FSVV…TISF) and 696-716 (VLMW…LLIM).

Its subcellular location is the endoplasmic reticulum membrane. The protein resides in the nucleus. Inhibits amyloid precursor protein processing, probably by blocking BACE1 activity. The sequence is that of Reticulon-1 from Xenopus tropicalis (Western clawed frog).